We begin with the raw amino-acid sequence, 395 residues long: Putative pyridoxal phosphate-dependent acyltransferase (395 aa).

110-111 lines the pyridoxal 5'-phosphate pocket; it reads GF. A substrate-binding site is contributed by His-135. Residues Ser-185, 210–213, and 240–243 contribute to the pyridoxal 5'-phosphate site; these read DDAH and TLSK. Lys-243 carries the post-translational modification N6-(pyridoxal phosphate)lysine. Thr-357 lines the substrate pocket.

It belongs to the class-II pyridoxal-phosphate-dependent aminotransferase family. As to quaternary structure, homodimer. Pyridoxal 5'-phosphate serves as cofactor.

The chain is Putative pyridoxal phosphate-dependent acyltransferase from Staphylococcus aureus (strain MRSA252).